The following is a 286-amino-acid chain: MTATLLDGKATAAEIKDELRVRVKALAERGVTPGLGTVLVGADPGSQAYVNGKHRDCAEVGVASLRRELPADASQEQVDAVLADLNADPACHGYIVQLPLPDHLDTQRVLELIDPEKDADGLHPVNLGRLVLGYPGPLPCTPRGIVELLRRHDVALRGARVAVVGRGNTVGRPLGLLLTRRSENATVTLCHTGTLDLSAHTRAADIVIVAAGVPGLLTPDMITPGAVVVDVGITRVIGPDGKGRYTGDVDPGVTEVAGALVPMPGGVGPMTRAMLLTNVVERAERG.

Residues 165–167 (GRG), T192, and I233 each bind NADP(+).

It belongs to the tetrahydrofolate dehydrogenase/cyclohydrolase family. As to quaternary structure, homodimer.

It catalyses the reaction (6R)-5,10-methylene-5,6,7,8-tetrahydrofolate + NADP(+) = (6R)-5,10-methenyltetrahydrofolate + NADPH. It carries out the reaction (6R)-5,10-methenyltetrahydrofolate + H2O = (6R)-10-formyltetrahydrofolate + H(+). It participates in one-carbon metabolism; tetrahydrofolate interconversion. Functionally, catalyzes the oxidation of 5,10-methylenetetrahydrofolate to 5,10-methenyltetrahydrofolate and then the hydrolysis of 5,10-methenyltetrahydrofolate to 10-formyltetrahydrofolate. The protein is Bifunctional protein FolD 2 of Salinispora arenicola (strain CNS-205).